A 309-amino-acid chain; its full sequence is MERINHTSSVSEFILLGLSSRPEDQKTLFVLFLIVYLVTITGNLLIILAIRFNPHLQTPMYFFLSFLSLTDICFTTSVVPKMLMNFLSEKKTISYAGCLTQMYFLYALGNSDSCLLAVMAFDRYVAVCDPFHYVTTMSHHHCVLLVAFSCSFPHLHSLLHTLLLNRLTFCDSNVIHHFLCDLSPVLKLSCSSIFVNEIVQMTEAPIVLVTRFLCIAFSYIRILTTVLKIPSTSGKRKAFSTCGFYLTVVTLFYGSIFCVYLQPPSTYAVKDHVATIVYTVLSSMLNPFIYSLRNKDLKQGLRKLMSKRS.

Over 1–26 (MERINHTSSVSEFILLGLSSRPEDQK) the chain is Extracellular. The N-linked (GlcNAc...) asparagine glycan is linked to Asn5. Residues 27–50 (TLFVLFLIVYLVTITGNLLIILAI) traverse the membrane as a helical segment. Residues 51-58 (RFNPHLQT) lie on the Cytoplasmic side of the membrane. Residues 59–80 (PMYFFLSFLSLTDICFTTSVVP) form a helical membrane-spanning segment. Residues 81 to 101 (KMLMNFLSEKKTISYAGCLTQ) are Extracellular-facing. Cys98 and Cys190 are disulfide-bonded. The helical transmembrane segment at 102 to 121 (MYFLYALGNSDSCLLAVMAF) threads the bilayer. Topologically, residues 122 to 140 (DRYVAVCDPFHYVTTMSHH) are cytoplasmic. The chain crosses the membrane as a helical span at residues 141 to 159 (HCVLLVAFSCSFPHLHSLL). The Extracellular segment spans residues 160–197 (HTLLLNRLTFCDSNVIHHFLCDLSPVLKLSCSSIFVNE). A helical membrane pass occupies residues 198-220 (IVQMTEAPIVLVTRFLCIAFSYI). The Cytoplasmic segment spans residues 221-237 (RILTTVLKIPSTSGKRK). The helical transmembrane segment at 238–260 (AFSTCGFYLTVVTLFYGSIFCVY) threads the bilayer. Over 261 to 272 (LQPPSTYAVKDH) the chain is Extracellular. The helical transmembrane segment at 273–292 (VATIVYTVLSSMLNPFIYSL) threads the bilayer. Residues 293–309 (RNKDLKQGLRKLMSKRS) lie on the Cytoplasmic side of the membrane.

The protein belongs to the G-protein coupled receptor 1 family.

It localises to the cell membrane. In terms of biological role, odorant receptor. The protein is Olfactory receptor 1L8 (OR1L8) of Homo sapiens (Human).